A 208-amino-acid polypeptide reads, in one-letter code: Uracil phosphoribosyltransferase (208 aa).

5-phospho-alpha-D-ribose 1-diphosphate is bound by residues R78, R103, and 130 to 138 (DPMLATGGS). Residues I193 and 198–200 (GDA) each bind uracil. D199 contacts 5-phospho-alpha-D-ribose 1-diphosphate.

Belongs to the UPRTase family. Mg(2+) is required as a cofactor.

The enzyme catalyses UMP + diphosphate = 5-phospho-alpha-D-ribose 1-diphosphate + uracil. It participates in pyrimidine metabolism; UMP biosynthesis via salvage pathway; UMP from uracil: step 1/1. Its activity is regulated as follows. Allosterically activated by GTP. In terms of biological role, catalyzes the conversion of uracil and 5-phospho-alpha-D-ribose 1-diphosphate (PRPP) to UMP and diphosphate. The chain is Uracil phosphoribosyltransferase from Yersinia pestis.